We begin with the raw amino-acid sequence, 224 residues long: Transcription cofactor HES-6 (224 aa).

Residues 1 to 31 (MAPSQAPSRDRAGQEDEDRWEARGDRKARKP) are disordered. Residues 8-25 (SRDRAGQEDEDRWEARGD) show a composition bias toward basic and acidic residues. Positions 25–77 (DRKARKPLVEKKRRARINESLQELRLLLAGTEVQAKLENAEVLELTVRRVQGA) constitute a bHLH domain. One can recognise an Orange domain in the interval 96–129 (FAAGYIQCMHEVHTFVSTCQAIDATVSAELLNHL). The disordered stretch occupies residues 146–209 (GDSLAGLPGG…GPDLVSTSLG (64 aa)). The span at 158-171 (RSSWPPGGSPESPL) shows a compositional bias: low complexity. Residues 181–190 (LCSDLEEIPE) are compositionally biased toward acidic residues. Positions 221–224 (WRPW) match the WRPW motif motif.

Transcription repression requires formation of a complex with a corepressor protein of the Groucho/TLE family. Interacts with HES1. As to expression, expressed in both undifferentiated and differentiated cells. High levels of expression are observed in several embryonic tissues including the nervous system, muscle and thymus. In the nervous system, initially expressed in the closing neural tube, then in the spinal cord, cranial and dorsal root ganglia, and brain neuroepithelium. Also expressed in epithelial cells of the embryonic respiratory, urinary and digestive systems. In the limb buds, expressed in skeletal muscle and presumptive tendons.

It is found in the nucleus. In terms of biological role, does not bind DNA itself but suppresses both HES1-mediated N box-dependent transcriptional repression and binding of HES1 to E box sequences. Also suppresses HES1-mediated inhibition of the heterodimer formed by ASCL1/MASH1 and TCF3/E47, allowing ASCL1 and TCF3 to up-regulate transcription in its presence. Promotes cell differentiation. This Mus musculus (Mouse) protein is Transcription cofactor HES-6.